The chain runs to 294 residues: Protease HtpX homolog 2 (294 aa).

2 helical membrane passes run 15–35 and 36–56; these read MLFT…FLSY and YGTS…AQYF. Residue His-140 participates in Zn(2+) binding. Glu-141 is an active-site residue. His-144 is a binding site for Zn(2+). Transmembrane regions (helical) follow at residues 151–171 and 185–205; these read AVLT…RYSL and GGIM…FLLI. Residue Glu-213 coordinates Zn(2+).

The protein belongs to the peptidase M48B family. The cofactor is Zn(2+).

It is found in the cell membrane. The polypeptide is Protease HtpX homolog 2 (Methanosarcina mazei (strain ATCC BAA-159 / DSM 3647 / Goe1 / Go1 / JCM 11833 / OCM 88) (Methanosarcina frisia)).